A 551-amino-acid chain; its full sequence is Chaperonin GroEL 2 (551 aa).

ATP-binding positions include threonine 30–proline 33, lysine 51, aspartate 87–threonine 91, glycine 415, and aspartate 496.

Belongs to the chaperonin (HSP60) family. In terms of assembly, forms a cylinder of 14 subunits composed of two heptameric rings stacked back-to-back. Interacts with the co-chaperonin GroES.

The protein localises to the cytoplasm. The enzyme catalyses ATP + H2O + a folded polypeptide = ADP + phosphate + an unfolded polypeptide.. Together with its co-chaperonin GroES, plays an essential role in assisting protein folding. The GroEL-GroES system forms a nano-cage that allows encapsulation of the non-native substrate proteins and provides a physical environment optimized to promote and accelerate protein folding. The sequence is that of Chaperonin GroEL 2 from Rhodopseudomonas palustris (strain BisB18).